Reading from the N-terminus, the 309-residue chain is Ribonuclease Z (309 aa).

Residues H63, H65, D67, H68, H145, D216, and H274 each contribute to the Zn(2+) site. D67 (proton acceptor) is an active-site residue.

This sequence belongs to the RNase Z family. As to quaternary structure, homodimer. Zn(2+) serves as cofactor.

The enzyme catalyses Endonucleolytic cleavage of RNA, removing extra 3' nucleotides from tRNA precursor, generating 3' termini of tRNAs. A 3'-hydroxy group is left at the tRNA terminus and a 5'-phosphoryl group is left at the trailer molecule.. Zinc phosphodiesterase, which displays some tRNA 3'-processing endonuclease activity. Probably involved in tRNA maturation, by removing a 3'-trailer from precursor tRNA. The chain is Ribonuclease Z from Streptococcus pyogenes serotype M6 (strain ATCC BAA-946 / MGAS10394).